The following is a 957-amino-acid chain: Isoleucine--tRNA ligase (957 aa).

The 'HIGH' region signature appears at P57–H67. Position 594 (E594) interacts with L-isoleucyl-5'-AMP. The 'KMSKS' region motif lies at K635–S639. Position 638 (K638) interacts with ATP. Positions 920, 923, 940, and 943 each coordinate Zn(2+).

Belongs to the class-I aminoacyl-tRNA synthetase family. IleS type 1 subfamily. Monomer. Zn(2+) serves as cofactor.

The protein resides in the cytoplasm. It carries out the reaction tRNA(Ile) + L-isoleucine + ATP = L-isoleucyl-tRNA(Ile) + AMP + diphosphate. Catalyzes the attachment of isoleucine to tRNA(Ile). As IleRS can inadvertently accommodate and process structurally similar amino acids such as valine, to avoid such errors it has two additional distinct tRNA(Ile)-dependent editing activities. One activity is designated as 'pretransfer' editing and involves the hydrolysis of activated Val-AMP. The other activity is designated 'posttransfer' editing and involves deacylation of mischarged Val-tRNA(Ile). This is Isoleucine--tRNA ligase from Laribacter hongkongensis (strain HLHK9).